The sequence spans 441 residues: Amino-acid acetyltransferase (441 aa).

The 140-residue stretch at Glu295 to Ser434 folds into the N-acetyltransferase domain.

This sequence belongs to the acetyltransferase family. ArgA subfamily. In terms of assembly, homohexamer.

The protein localises to the cytoplasm. It catalyses the reaction L-glutamate + acetyl-CoA = N-acetyl-L-glutamate + CoA + H(+). It participates in amino-acid biosynthesis; L-arginine biosynthesis; N(2)-acetyl-L-ornithine from L-glutamate: step 1/4. In Edwardsiella ictaluri (strain 93-146), this protein is Amino-acid acetyltransferase.